The primary structure comprises 274 residues: Undecaprenyl-diphosphatase (274 aa).

8 helical membrane-spanning segments follow: residues 9-29 (LEYL…FIPV), 47-67 (PGAS…AWYF), 95-115 (ILIG…FVPY), 120-140 (VLRS…FMYL), 161-181 (LIGF…GITI), 197-217 (FSFL…FISS), 224-244 (LGFF…LLAI), and 254-274 (NGLK…LLNL).

Belongs to the UppP family.

Its subcellular location is the cell inner membrane. The catalysed reaction is di-trans,octa-cis-undecaprenyl diphosphate + H2O = di-trans,octa-cis-undecaprenyl phosphate + phosphate + H(+). Catalyzes the dephosphorylation of undecaprenyl diphosphate (UPP). Confers resistance to bacitracin. This is Undecaprenyl-diphosphatase from Prochlorococcus marinus (strain AS9601).